A 61-amino-acid polypeptide reads, in one-letter code: Phosphoenolpyruvate synthase (61 aa).

It belongs to the PEP-utilizing enzyme family. It depends on Mg(2+) as a cofactor.

It carries out the reaction pyruvate + ATP + H2O = phosphoenolpyruvate + AMP + phosphate + 2 H(+). It participates in carbohydrate biosynthesis; gluconeogenesis. In terms of biological role, catalyzes the phosphorylation of pyruvate to phosphoenolpyruvate. This chain is Phosphoenolpyruvate synthase (ppsA), found in Enterobacter agglomerans (Erwinia herbicola).